The chain runs to 123 residues: MTWPYSNSFKLIKAYQKHSNTYQSCTNHKYKSVLLKKWTQDVMDNELRIESRPYKNCDAFCQMCLSVVTINEYLCCDKCLFPIIDYLEKQRQLTPRQQLYMFVFLSICYWKEAAERRLATMKN.

This is an uncharacterized protein from Autographa californica nuclear polyhedrosis virus (AcMNPV).